The chain runs to 263 residues: Hydroxyethylthiazole kinase (263 aa).

M39 is a binding site for substrate. ATP is bound by residues K115 and T160. G187 is a binding site for substrate.

This sequence belongs to the Thz kinase family. Mg(2+) serves as cofactor.

It catalyses the reaction 5-(2-hydroxyethyl)-4-methylthiazole + ATP = 4-methyl-5-(2-phosphooxyethyl)-thiazole + ADP + H(+). It functions in the pathway cofactor biosynthesis; thiamine diphosphate biosynthesis; 4-methyl-5-(2-phosphoethyl)-thiazole from 5-(2-hydroxyethyl)-4-methylthiazole: step 1/1. In terms of biological role, catalyzes the phosphorylation of the hydroxyl group of 4-methyl-5-beta-hydroxyethylthiazole (THZ). In Staphylococcus aureus (strain bovine RF122 / ET3-1), this protein is Hydroxyethylthiazole kinase.